The chain runs to 176 residues: Ribosome maturation factor RimM (176 aa).

The 75-residue stretch at 99-173 folds into the PRC barrel domain; sequence KEGEFHLVDL…WLLIKPPPGL (75 aa).

It belongs to the RimM family. Binds ribosomal protein uS19.

It localises to the cytoplasm. Functionally, an accessory protein needed during the final step in the assembly of 30S ribosomal subunit, possibly for assembly of the head region. Essential for efficient processing of 16S rRNA. May be needed both before and after RbfA during the maturation of 16S rRNA. It has affinity for free ribosomal 30S subunits but not for 70S ribosomes. The protein is Ribosome maturation factor RimM of Prochlorococcus marinus (strain MIT 9211).